Consider the following 279-residue polypeptide: Protease HtpX homolog (279 aa).

Transmembrane regions (helical) follow at residues 4-24 (IFLF…VLAV) and 34-54 (GSLL…SLLM). His140 is a binding site for Zn(2+). The active site involves Glu141. His144 is a binding site for Zn(2+). Helical transmembrane passes span 155–175 (LIQG…ANLI) and 189–209 (FLVS…IVMW). Glu215 serves as a coordination point for Zn(2+).

Belongs to the peptidase M48B family. Zn(2+) serves as cofactor.

It localises to the cell inner membrane. The chain is Protease HtpX homolog from Neisseria meningitidis serogroup B (strain ATCC BAA-335 / MC58).